A 661-amino-acid polypeptide reads, in one-letter code: Transmembrane and coiled-coil domain-containing protein STS1 (661 aa).

Disordered regions lie at residues 34–71 (AHHH…GADA) and 154–185 (VGNT…DDQL). A compositionally biased stretch (low complexity) spans 59–69 (SSSSSNSGAGA). Positions 175–184 (SPGESSHDDQ) are enriched in basic and acidic residues. 4 helical membrane-spanning segments follow: residues 306-326 (ALLA…FGAL), 333-353 (LVPV…GSVA), 355-375 (SVAV…SKMA), and 466-486 (LSGL…TDFI).

This sequence belongs to the TMCO4 family. In terms of assembly, interacts with PKS10/PKS2 and 4CLL9/ACOS12.

The protein resides in the endoplasmic reticulum membrane. In terms of biological role, involved in anther lipids biosynthesis and is required for tapetum degradation and pollen wall formation. Required for the formation of Ubisch bodies and microspores. Possesses lipase activity in vitro toward two synthetic substrates, p-nitrophenyl acetate (pNPA) and p-nitrophenyl butyrate (pNPB). This chain is Transmembrane and coiled-coil domain-containing protein STS1, found in Oryza sativa subsp. japonica (Rice).